Reading from the N-terminus, the 844-residue chain is Patched-related protein 9 (844 aa).

In terms of domain architecture, SSD spans 264–421; that stretch reads LIPWMPWTSL…VTFFNAVMSL (158 aa).

The protein belongs to the patched family.

This chain is Patched-related protein 9 (ptr-9), found in Caenorhabditis elegans.